The following is a 66-amino-acid chain: Photosystem II reaction center protein H (66 aa).

Residues 27–47 (GAVPIMTVIGLLLLVFLVILL) traverse the membrane as a helical segment.

Belongs to the PsbH family. In terms of assembly, PSII is composed of 1 copy each of membrane proteins PsbA, PsbB, PsbC, PsbD, PsbE, PsbF, PsbH, PsbI, PsbJ, PsbK, PsbL, PsbM, PsbT, PsbX, PsbY, Psb30/Ycf12, peripheral proteins PsbO, CyanoQ (PsbQ), PsbU, PsbV and a large number of cofactors. It forms dimeric complexes.

It is found in the cellular thylakoid membrane. Functionally, one of the components of the core complex of photosystem II (PSII), required for its stability and/or assembly. PSII is a light-driven water:plastoquinone oxidoreductase that uses light energy to abstract electrons from H(2)O, generating O(2) and a proton gradient subsequently used for ATP formation. It consists of a core antenna complex that captures photons, and an electron transfer chain that converts photonic excitation into a charge separation. The protein is Photosystem II reaction center protein H of Prochlorococcus marinus (strain MIT 9515).